We begin with the raw amino-acid sequence, 475 residues long: ATP synthase subunit beta (475 aa).

Residue 153-160 (GGAGVGKT) participates in ATP binding.

The protein belongs to the ATPase alpha/beta chains family. F-type ATPases have 2 components, CF(1) - the catalytic core - and CF(0) - the membrane proton channel. CF(1) has five subunits: alpha(3), beta(3), gamma(1), delta(1), epsilon(1). CF(0) has three main subunits: a(1), b(2) and c(9-12). The alpha and beta chains form an alternating ring which encloses part of the gamma chain. CF(1) is attached to CF(0) by a central stalk formed by the gamma and epsilon chains, while a peripheral stalk is formed by the delta and b chains.

It is found in the cell membrane. It catalyses the reaction ATP + H2O + 4 H(+)(in) = ADP + phosphate + 5 H(+)(out). In terms of biological role, produces ATP from ADP in the presence of a proton gradient across the membrane. The catalytic sites are hosted primarily by the beta subunits. This is ATP synthase subunit beta from Limosilactobacillus reuteri (strain DSM 20016) (Lactobacillus reuteri).